The primary structure comprises 238 residues: Large ribosomal subunit protein uL1 (238 aa).

The segment at 217-238 (TNGPGVPVDETIQKNYADDAEA) is disordered.

Belongs to the universal ribosomal protein uL1 family. Part of the 50S ribosomal subunit.

Binds directly to 23S rRNA. The L1 stalk is quite mobile in the ribosome, and is involved in E site tRNA release. Functionally, protein L1 is also a translational repressor protein, it controls the translation of the L11 operon by binding to its mRNA. This Corynebacterium urealyticum (strain ATCC 43042 / DSM 7109) protein is Large ribosomal subunit protein uL1.